We begin with the raw amino-acid sequence, 429 residues long: 3-phosphoshikimate 1-carboxyvinyltransferase (429 aa).

Positions 22, 23, and 27 each coordinate 3-phosphoshikimate. Lys-22 lines the phosphoenolpyruvate pocket. Phosphoenolpyruvate contacts are provided by Gly-94 and Arg-122. Residues Ser-167, Gln-169, Asp-315, and Lys-342 each contribute to the 3-phosphoshikimate site. Gln-169 contacts phosphoenolpyruvate. Residue Asp-315 is the Proton acceptor of the active site. Arg-346 and Arg-388 together coordinate phosphoenolpyruvate.

It belongs to the EPSP synthase family. Monomer.

It is found in the cytoplasm. It catalyses the reaction 3-phosphoshikimate + phosphoenolpyruvate = 5-O-(1-carboxyvinyl)-3-phosphoshikimate + phosphate. It functions in the pathway metabolic intermediate biosynthesis; chorismate biosynthesis; chorismate from D-erythrose 4-phosphate and phosphoenolpyruvate: step 6/7. Catalyzes the transfer of the enolpyruvyl moiety of phosphoenolpyruvate (PEP) to the 5-hydroxyl of shikimate-3-phosphate (S3P) to produce enolpyruvyl shikimate-3-phosphate and inorganic phosphate. In Citrifermentans bemidjiense (strain ATCC BAA-1014 / DSM 16622 / JCM 12645 / Bem) (Geobacter bemidjiensis), this protein is 3-phosphoshikimate 1-carboxyvinyltransferase.